A 158-amino-acid polypeptide reads, in one-letter code: Ribosome maturation factor RimP (158 aa).

The protein belongs to the RimP family.

Its subcellular location is the cytoplasm. Required for maturation of 30S ribosomal subunits. In Pseudomonas fluorescens (strain ATCC BAA-477 / NRRL B-23932 / Pf-5), this protein is Ribosome maturation factor RimP.